A 225-amino-acid polypeptide reads, in one-letter code: MKHVAPPPTAEAVFGDRLPLAQRYAEFLATAGVERGLIGPRETDRIWDRHILNSAALGESVESGDRIADIGSGAGLPGIPLALARPDVHVTLIEPMQRRCEFLTEVVDALGVAVIVVRGRAENPAVRREVGEMDVVTSRAVGSLDKLATWSMGILREGGRMLALKGARAEAEIEENRRVLARAGAVDVRVLRCGADYLNPPATVVEARRATPSNGRGRPGRSSRR.

S-adenosyl-L-methionine is bound by residues glycine 71, leucine 76, 121-122 (AE), and arginine 139. The tract at residues 204–225 (VVEARRATPSNGRGRPGRSSRR) is disordered.

It belongs to the methyltransferase superfamily. RNA methyltransferase RsmG family.

Its subcellular location is the cytoplasm. Functionally, specifically methylates the N7 position of guanine in position 518 of 16S rRNA. The polypeptide is Ribosomal RNA small subunit methyltransferase G (Mycobacterium sp. (strain KMS)).